The sequence spans 91 residues: MISIDLALKYTPLPISVQRKEVEDAQTLYNQIVNAMKSGTSQLIELTCEKQTEKKVAVMSDQISAVILSQKDGGAAAGRVPGFFSMVESEQ.

Belongs to the UPF0367 family.

The protein is UPF0367 protein cce_2199 of Crocosphaera subtropica (strain ATCC 51142 / BH68) (Cyanothece sp. (strain ATCC 51142)).